We begin with the raw amino-acid sequence, 124 residues long: ATP synthase epsilon chain (124 aa).

The span at 99-118 (LEQAKTEGDAHAERRADVRL) shows a compositional bias: basic and acidic residues. A disordered region spans residues 99–124 (LEQAKTEGDAHAERRADVRLRAAAGR).

This sequence belongs to the ATPase epsilon chain family. F-type ATPases have 2 components, CF(1) - the catalytic core - and CF(0) - the membrane proton channel. CF(1) has five subunits: alpha(3), beta(3), gamma(1), delta(1), epsilon(1). CF(0) has three main subunits: a, b and c.

The protein localises to the cell membrane. Functionally, produces ATP from ADP in the presence of a proton gradient across the membrane. The protein is ATP synthase epsilon chain (atpC) of Streptomyces coelicolor (strain ATCC BAA-471 / A3(2) / M145).